We begin with the raw amino-acid sequence, 299 residues long: ATP phosphoribosyltransferase (299 aa).

This sequence belongs to the ATP phosphoribosyltransferase family. Long subfamily. As to quaternary structure, equilibrium between an active dimeric form, an inactive hexameric form and higher aggregates. Interconversion between the various forms is largely reversible and is influenced by the natural substrates and inhibitors of the enzyme. Requires Mg(2+) as cofactor.

Its subcellular location is the cytoplasm. The catalysed reaction is 1-(5-phospho-beta-D-ribosyl)-ATP + diphosphate = 5-phospho-alpha-D-ribose 1-diphosphate + ATP. It functions in the pathway amino-acid biosynthesis; L-histidine biosynthesis; L-histidine from 5-phospho-alpha-D-ribose 1-diphosphate: step 1/9. Feedback inhibited by histidine. Its function is as follows. Catalyzes the condensation of ATP and 5-phosphoribose 1-diphosphate to form N'-(5'-phosphoribosyl)-ATP (PR-ATP). Has a crucial role in the pathway because the rate of histidine biosynthesis seems to be controlled primarily by regulation of HisG enzymatic activity. This Klebsiella pneumoniae (strain 342) protein is ATP phosphoribosyltransferase.